The following is a 343-amino-acid chain: Probable fructokinase-7 (343 aa).

Gly-2 is subject to N-acetylglycine.

It belongs to the carbohydrate kinase PfkB family.

The enzyme catalyses D-fructose + ATP = D-fructose 6-phosphate + ADP + H(+). It functions in the pathway glycan biosynthesis; starch biosynthesis. In terms of biological role, may play an important role in maintaining the flux of carbon towards starch formation. This is Probable fructokinase-7 from Arabidopsis thaliana (Mouse-ear cress).